The primary structure comprises 63 residues: uncharacterized protein (63 aa).

The helical transmembrane segment at 3-23 threads the bilayer; the sequence is IIYIILGFLSLAIGIIGIFPS.

The protein resides in the membrane. This is an uncharacterized protein from Haemophilus influenzae (strain ATCC 51907 / DSM 11121 / KW20 / Rd).